Here is a 448-residue protein sequence, read N- to C-terminus: MRAVVVVTGLVVVVVATALSLPNHDVKSATSSRSSSDYQGSSGDDCDEGLPPPDQPFRVVWNHPDNCERIKLHLPLDDYGIIFNKLRVFLGEEIQTLYDTGPWPYISETGKFINGGLPQSFNHPDNDGETQRILKKHRPENFTGLGVLDFETWRAIYSTNFGPMTIYQNESVKLVKEQHPDYDQKKLTKVAEKEWQQAAKDIMSNKLKIAQEVMPRGHWGYYLYPRTWDNKRDTKFRNDKINWLWRQSTGLYPSIYIYDFSKTESAITKFVSDTVGEAVRVQKEFSPPNTPIYPYVMFQTMDNIFHYEDHLKISLGLSAKMGAAGVVLWGTSKHYKESTRQWQCQQLQEHIRTVLGPLVKNVTQMMTDCSRAICEGHGRCVHNSHDVILGETESQRLSDLCSTRQSRFRDYHCRCYSAWEGACCQTLRPSRCQKREQRNVHGGGDLID.

The signal sequence occupies residues 1–18; that stretch reads MRAVVVVTGLVVVVVATA. The propeptide occupies 19-33; that stretch reads LSLPNHDVKSATSSR. Residues 26 to 55 form a disordered region; sequence VKSATSSRSSSDYQGSSGDDCDEGLPPPDQ. Positions 31–43 are enriched in low complexity; that stretch reads SSRSSSDYQGSSG. C67 and C344 are joined by a disulfide. N-linked (GlcNAc...) asparagine glycosylation occurs at N141. The active-site Proton donor is E151. N-linked (GlcNAc...) asparagine glycans are attached at residues N169 and N361. 3 disulfides stabilise this stretch: C369–C380, C374–C413, and C415–C424. The EGF-like domain occupies 413–424; it reads CRCYSAWEGACC.

Belongs to the glycosyl hydrolase 56 family. Expressed by the venom duct.

Its subcellular location is the secreted. It carries out the reaction Random hydrolysis of (1-&gt;4)-linkages between N-acetyl-beta-D-glucosamine and D-glucuronate residues in hyaluronate.. Functionally, hyaluronidase catalyzes the hydrolysis of hyaluronic acid (HA), an anionic, nonsulfated glycosaminoglycan distributed widely throughout connective, epithelial, and neural tissues. In venom, they are known to enhance diffusion of the venom by degrading the extracellular matrix. This chain is Hyaluronidase conohyal-Cn1, found in Conus consors (Singed cone).